Consider the following 237-residue polypeptide: Leucyl/phenylalanyl-tRNA--protein transferase (237 aa).

Belongs to the L/F-transferase family.

It localises to the cytoplasm. It catalyses the reaction N-terminal L-lysyl-[protein] + L-leucyl-tRNA(Leu) = N-terminal L-leucyl-L-lysyl-[protein] + tRNA(Leu) + H(+). The enzyme catalyses N-terminal L-arginyl-[protein] + L-leucyl-tRNA(Leu) = N-terminal L-leucyl-L-arginyl-[protein] + tRNA(Leu) + H(+). It carries out the reaction L-phenylalanyl-tRNA(Phe) + an N-terminal L-alpha-aminoacyl-[protein] = an N-terminal L-phenylalanyl-L-alpha-aminoacyl-[protein] + tRNA(Phe). Functionally, functions in the N-end rule pathway of protein degradation where it conjugates Leu, Phe and, less efficiently, Met from aminoacyl-tRNAs to the N-termini of proteins containing an N-terminal arginine or lysine. This chain is Leucyl/phenylalanyl-tRNA--protein transferase, found in Shewanella baltica (strain OS195).